The primary structure comprises 214 residues: Transmembrane emp24 domain-containing protein p24beta3 (214 aa).

The signal sequence occupies residues 1-27; that stretch reads MERRQAKIHVFVLIGLILLNSINQISS. Residues 28–178 lie on the Lumenal side of the membrane; that stretch reads LSVTVNDEEC…RHTNESTRKR (151 aa). Residues 35–122 form the GOLD domain; the sequence is EECVQEYVLY…PETVSFYIHV (88 aa). Positions 140 to 158 form a coiled coil; it reads VNVKIAELREALESVVAEQ. An omega-N-methylated arginine mark is found at arginine 164 and arginine 169. Asparagine 172 carries N-linked (GlcNAc...) asparagine glycosylation. A helical membrane pass occupies residues 179-199; that stretch reads VIFYTVGEYIFLAAASGLQVL. Residues 200 to 214 are Cytoplasmic-facing; it reads YIRKLFSKSVAYNRV. The COPII vesicle coat-binding signature appears at 204–205; that stretch reads LF. The COPI vesicle coat-binding signature appears at 204-214; the sequence is LFSKSVAYNRV. The Required for the export from the endoplasmic reticulum to the Golgi motif lies at 213–214; that stretch reads RV.

It belongs to the EMP24/GP25L family. In terms of assembly, probably oligomerizes with other members of the EMP24/GP25L family. Associates with the COPI vesicle coat (coatomer). Associates with the COPII vesicle coat (coatomer).

It is found in the golgi apparatus. It localises to the cis-Golgi network membrane. Its subcellular location is the golgi stack membrane. Functionally, involved in vesicular protein trafficking. Mainly functions in the early secretory pathway but also in post-Golgi membranes. Thought to act as cargo receptor at the lumenal side for incorporation of secretory cargo molecules into transport vesicles and to be involved in vesicle coat formation at the cytoplasmic side. The polypeptide is Transmembrane emp24 domain-containing protein p24beta3 (Arabidopsis thaliana (Mouse-ear cress)).